The primary structure comprises 212 residues: Large ribosomal subunit protein uL3 (212 aa).

The disordered stretch occupies residues 134–154; sequence RKTHGNSVSHRVPGSIGQNQT. Q153 carries the post-translational modification N5-methylglutamine.

This sequence belongs to the universal ribosomal protein uL3 family. As to quaternary structure, part of the 50S ribosomal subunit. Forms a cluster with proteins L14 and L19. Methylated by PrmB.

In terms of biological role, one of the primary rRNA binding proteins, it binds directly near the 3'-end of the 23S rRNA, where it nucleates assembly of the 50S subunit. The sequence is that of Large ribosomal subunit protein uL3 from Dichelobacter nodosus (strain VCS1703A).